The following is a 272-amino-acid chain: Imidazole glycerol phosphate synthase subunit HisF (272 aa).

Catalysis depends on residues aspartate 11 and aspartate 130.

The protein belongs to the HisA/HisF family. As to quaternary structure, heterodimer of HisH and HisF.

It localises to the cytoplasm. It carries out the reaction 5-[(5-phospho-1-deoxy-D-ribulos-1-ylimino)methylamino]-1-(5-phospho-beta-D-ribosyl)imidazole-4-carboxamide + L-glutamine = D-erythro-1-(imidazol-4-yl)glycerol 3-phosphate + 5-amino-1-(5-phospho-beta-D-ribosyl)imidazole-4-carboxamide + L-glutamate + H(+). Its pathway is amino-acid biosynthesis; L-histidine biosynthesis; L-histidine from 5-phospho-alpha-D-ribose 1-diphosphate: step 5/9. IGPS catalyzes the conversion of PRFAR and glutamine to IGP, AICAR and glutamate. The HisF subunit catalyzes the cyclization activity that produces IGP and AICAR from PRFAR using the ammonia provided by the HisH subunit. In Methanococcus vannielii (strain ATCC 35089 / DSM 1224 / JCM 13029 / OCM 148 / SB), this protein is Imidazole glycerol phosphate synthase subunit HisF.